The following is a 156-amino-acid chain: ATP synthase subunit b (156 aa).

Residues 7 to 27 form a helical membrane-spanning segment; that stretch reads LFVQAIVFAILVWFTMKFVWP.

The protein belongs to the ATPase B chain family. As to quaternary structure, F-type ATPases have 2 components, F(1) - the catalytic core - and F(0) - the membrane proton channel. F(1) has five subunits: alpha(3), beta(3), gamma(1), delta(1), epsilon(1). F(0) has three main subunits: a(1), b(2) and c(10-14). The alpha and beta chains form an alternating ring which encloses part of the gamma chain. F(1) is attached to F(0) by a central stalk formed by the gamma and epsilon chains, while a peripheral stalk is formed by the delta and b chains.

Its subcellular location is the cell inner membrane. Its function is as follows. F(1)F(0) ATP synthase produces ATP from ADP in the presence of a proton or sodium gradient. F-type ATPases consist of two structural domains, F(1) containing the extramembraneous catalytic core and F(0) containing the membrane proton channel, linked together by a central stalk and a peripheral stalk. During catalysis, ATP synthesis in the catalytic domain of F(1) is coupled via a rotary mechanism of the central stalk subunits to proton translocation. Component of the F(0) channel, it forms part of the peripheral stalk, linking F(1) to F(0). The polypeptide is ATP synthase subunit b (Polaromonas sp. (strain JS666 / ATCC BAA-500)).